The primary structure comprises 494 residues: MEQKEGKLSEDGTTVSPAADNPEMSGGGAPAEETKGTAGKAINEGPPTESGKQEKAPAEDGMSAELQGEANGLDEVKVESQREAGGKEDAEAELKKEDGEKEETTVGSQEMTGRKEETKSEPKEAEEKESTLASEKQKAEEKEAKPESGQKADANDRDKPEPKATVEEEDAKTASQEETGQRKECSTEPKEKATDEEAKAESQKAVVEDEAKAEPKEPDGKEEAKHGAKEEADAKEEAEDAEEAEPGSPSEEQEQDVEKEPEGGAGVIPSSPEEWPESPTGEGHNLSTDGLGPDCVASGQTSPSASESSPSDVPQSPPESPSSGEKKEKAPERRVSAPARPRGPRAQNRKAIVDKFGGAASGPTALFRNTKAAGAAIGGVKNMLLEWCRAMTKKYEHVDIQNFSSSWSSGMAFCALIHKFFPDAFDYAELDPAKRRHNFTLAFSTAEKLADCAQLLDVDDMVRLAVPDSKCVYTYIQELYRSLVQKGLVKTKKK.

Basic and acidic residues-rich tracts occupy residues 1–10 (MEQKEGKLSE), 74–104 (DEVK…KEET), 112–166 (TGRK…KATV), and 179–232 (TGQR…KEEA). The segment at 1–348 (MEQKEGKLSE…ARPRGPRAQN (348 aa)) is disordered. Positions 123-145 (KEAEEKESTLASEKQKAEEKEAK) form a coiled coil. Over residues 233–255 (DAKEEAEDAEEAEPGSPSEEQEQ) the composition is skewed to acidic residues. 2 stretches are compositionally biased toward low complexity: residues 269 to 279 (PSSPEEWPESP) and 302 to 314 (SPSA…SDVP). Residues 324–335 (GEKKEKAPERRV) show a composition bias toward basic and acidic residues. Phosphoserine is present on S336. Residues 378-484 (GGVKNMLLEW…YIQELYRSLV (107 aa)) form the Calponin-homology (CH) domain. Positions 476 to 494 (IQELYRSLVQKGLVKTKKK) are calmodulin-binding.

It belongs to the smoothelin family. As to quaternary structure, interacts with PPP1R12A. Post-translationally, maximal phosphorylation of Ser-336 correlates with maximal relaxation of aorta in response to acetylcholine. In terms of tissue distribution, expressed in striated muscles, specifically in type 2a fibers (at protein level).

The protein localises to the cytoplasm. Its subcellular location is the myofibril. The protein resides in the sarcomere. It is found in the i band. It localises to the m line. The protein localises to the nucleus. In terms of biological role, plays a role in the regulation of contractile properties of both striated and smooth muscles. When unphosphorylated, may inhibit myosin dephosphorylation. Phosphorylation at Ser-299 reduces this inhibitory activity. This chain is Smoothelin-like protein 1 (SMTNL1), found in Homo sapiens (Human).